The chain runs to 87 residues: Small ribosomal subunit protein bS20 (87 aa).

The segment at 1–26 (MANIKSAKKRAVQSEKARKHNASRRS) is disordered.

This sequence belongs to the bacterial ribosomal protein bS20 family.

Binds directly to 16S ribosomal RNA. The sequence is that of Small ribosomal subunit protein bS20 from Enterobacter sp. (strain 638).